The following is a 157-amino-acid chain: Large ribosomal subunit protein mL59 (157 aa).

It belongs to the mitochondrion-specific ribosomal protein mL59 family. Component of the mitochondrial large ribosomal subunit (mt-LSU). Mature yeast 74S mitochondrial ribosomes consist of a small (37S) and a large (54S) subunit. The 37S small subunit contains a 15S ribosomal RNA (15S mt-rRNA) and 34 different proteins. The 54S large subunit contains a 21S rRNA (21S mt-rRNA) and 46 different proteins.

The protein localises to the mitochondrion. Its function is as follows. Component of the mitochondrial ribosome (mitoribosome), a dedicated translation machinery responsible for the synthesis of mitochondrial genome-encoded proteins, including at least some of the essential transmembrane subunits of the mitochondrial respiratory chain. The mitoribosomes are attached to the mitochondrial inner membrane and translation products are cotranslationally integrated into the membrane. The protein is Large ribosomal subunit protein mL59 (MRPL25) of Saccharomyces cerevisiae (strain ATCC 204508 / S288c) (Baker's yeast).